Here is a 460-residue protein sequence, read N- to C-terminus: Ecdysteroid UDP-glucosyltransferase (460 aa).

The signal sequence occupies residues 1–18 (MFISILLLALAVERILCA).

The protein belongs to the UDP-glycosyltransferase family.

Catalyzes the transfer of glucose from UDP-glucose to ecdysteroids which are insect molting hormones. Expression of egt interferes with normal insect development and block molting. This is Ecdysteroid UDP-glucosyltransferase (EGT) from Lacanobia oleracea granulosis virus (LoGV).